Reading from the N-terminus, the 89-residue chain is UPF0223 protein Bcer98_2663 (89 aa).

Belongs to the UPF0223 family.

The chain is UPF0223 protein Bcer98_2663 from Bacillus cytotoxicus (strain DSM 22905 / CIP 110041 / 391-98 / NVH 391-98).